The primary structure comprises 634 residues: Formate--tetrahydrofolate ligase (634 aa).

Residue 78–85 (TPLGEGKS) coordinates ATP.

Belongs to the formate--tetrahydrofolate ligase family. In terms of assembly, homodimer.

The enzyme catalyses (6S)-5,6,7,8-tetrahydrofolate + formate + ATP = (6R)-10-formyltetrahydrofolate + ADP + phosphate. Its pathway is one-carbon metabolism; tetrahydrofolate interconversion. The polypeptide is Formate--tetrahydrofolate ligase (THFS) (Arabidopsis thaliana (Mouse-ear cress)).